The sequence spans 720 residues: ABC transporter G family member STR2 (720 aa).

Residues 1-467 (MRHANGRRGD…NFINIRRTPE (467 aa)) lie on the Cytoplasmic side of the membrane. An ABC transporter domain is found at 25-274 (LEFSNLTYTV…LGRMGRKVPK (250 aa)). 70–77 (GPSGAGKS) contributes to the ATP binding site. Positions 313–346 (GAHEMSIVPPSPAPSHREGRGHDRSNKRLHLKDQ) are disordered. Positions 327–346 (SHREGRGHDRSNKRLHLKDQ) are enriched in basic and acidic residues. The helical transmembrane segment at 468-488 (LFLSRLVVLTVMGIMMATMFM) threads the bilayer. The Extracellular segment spans residues 489 to 502 (HPKKNLQGITNRLS). Residues 503 to 523 (FFIFTVCLFFFSSNDAVPAFI) traverse the membrane as a helical segment. At 524–547 (QERFIFVRETSHNKYRASSYTIAG) the chain is on the cytoplasmic side. Residues 548 to 568 (LITYLPFLAVQAAVYAVIVWF) traverse the membrane as a helical segment. Residues 569–575 (ALSLRGP) are Extracellular-facing. A helical transmembrane segment spans residues 576–596 (FIYFLIVLYMSLLSTNSFVVF). The Cytoplasmic portion of the chain corresponds to 597 to 604 (VSSVVPNY). Residues 605–625 (ILGYAAVIAFTALFFLFCGYF) traverse the membrane as a helical segment. Topologically, residues 626–693 (LNSHDMPQYW…QVESKKWEKV (68 aa)) are extracellular. Residue N681 is glycosylated (N-linked (GlcNAc...) asparagine). Residues 694–714 (YIMLAWAIVYRILFYIVLRFF) form a helical membrane-spanning segment. Residues 715–720 (SKNQRT) are Cytoplasmic-facing.

It belongs to the ABC transporter superfamily. ABCG family. Stunted arbuscule (STR) subfamily. Heterodimerizes with STR; the resulting transporter is located in the peri-arbuscular membrane.

Its subcellular location is the cell membrane. In terms of biological role, together with STR, required for arbuscule development in arbuscular mycorrhizal (AM) symbiosis. In Petunia hybrida (Petunia), this protein is ABC transporter G family member STR2.